The following is an 836-amino-acid chain: Probable ribonuclease ZC3H12B (836 aa).

The segment at 1–92 is disordered; sequence MTATAEVETP…SPCLDRPSFS (92 aa). A compositionally biased stretch (basic and acidic residues) spans 8–28; it reads ETPKMEKSASKEEKQQPKQDS. The span at 35–46 shows a compositional bias: acidic residues; the sequence is DSEEWMSSESDP. Over residues 50–60 the composition is skewed to polar residues; that stretch reads SLKSSDNSKSC. A compositionally biased stretch (basic residues) spans 70–80; that stretch reads KEMHSKPHRQL. An RNase NYN domain is found at 190–345; that stretch reads LRPVVIDGSN…LGRHGPSLEN (156 aa). A C3H1-type zinc finger spans residues 355–380; sequence EHKKQPCPYGKKCTYGHKCKYYHPER.

It belongs to the ZC3H12 family. The cofactor is Mg(2+).

In terms of biological role, may function as RNase and regulate the levels of target RNA species. The polypeptide is Probable ribonuclease ZC3H12B (ZC3H12B) (Homo sapiens (Human)).